The primary structure comprises 305 residues: Acetyl-coenzyme A carboxylase carboxyl transferase subunit beta (305 aa).

Positions 25-293 constitute a CoA carboxyltransferase N-terminal domain; it reads LWVQCPACQQ…LPKVESVASL (269 aa). Zn(2+) contacts are provided by C29, C32, C48, and C51. The segment at 29–51 adopts a C4-type zinc-finger fold; it reads CPACQQMIFARDLEKNQRVCTHC.

This sequence belongs to the AccD/PCCB family. In terms of assembly, acetyl-CoA carboxylase is a heterohexamer composed of biotin carboxyl carrier protein (AccB), biotin carboxylase (AccC) and two subunits each of ACCase subunit alpha (AccA) and ACCase subunit beta (AccD). Zn(2+) is required as a cofactor.

It localises to the cytoplasm. The catalysed reaction is N(6)-carboxybiotinyl-L-lysyl-[protein] + acetyl-CoA = N(6)-biotinyl-L-lysyl-[protein] + malonyl-CoA. It participates in lipid metabolism; malonyl-CoA biosynthesis; malonyl-CoA from acetyl-CoA: step 1/1. In terms of biological role, component of the acetyl coenzyme A carboxylase (ACC) complex. Biotin carboxylase (BC) catalyzes the carboxylation of biotin on its carrier protein (BCCP) and then the CO(2) group is transferred by the transcarboxylase to acetyl-CoA to form malonyl-CoA. The sequence is that of Acetyl-coenzyme A carboxylase carboxyl transferase subunit beta from Granulibacter bethesdensis (strain ATCC BAA-1260 / CGDNIH1).